A 21-amino-acid chain; its full sequence is Protopolybiakinin-1 (21 aa).

Residues 1 to 11 are compositionally biased toward basic residues; that stretch reads DKNKKPIRVGG. Positions 1 to 21 are disordered; sequence DKNKKPIRVGGRRPPGFTPFR.

The protein belongs to the bradykinin-related peptide family. Expressed by the venom gland.

It localises to the secreted. In terms of biological role, causes constriction of the isolated rat ileum muscles (is 13-fold less potent than bradykinin (BK)), as well as degranulation of mast cells (is 7-fold more potent than BK). In vivo, causes algesic effects. Muscle constriction and algesic effects are partially mediated by bradykinin receptors B2 (BDKRB2). The protein is Protopolybiakinin-1 of Protopolybia exigua (Neotropical social wasp).